The sequence spans 234 residues: Glycerol uptake facilitator protein (234 aa).

6 helical membrane-spanning segments follow: residues 9–29 (FLGTLILILLGNGVVAGVVLP), 37–57 (GWIVITMGWGIAVAVAVFVSG), 61–81 (PAHLNPAVTIGVALKGGLPWA), 83–103 (VLPYILAQFAGAMLGQILVWL), 135–155 (LISEILGTFVLVLTIFALGLY), and 159–179 (AGIGTFAVGTLIVGIGLSLGG). The NPA 1 motif lies at 65–67 (NPA). The short motif at 186-188 (NPA) is the NPA 2 element. The helical transmembrane segment at 214–234 (WIPVVGPVIGAALAVLVFSLF) threads the bilayer.

The protein belongs to the MIP/aquaporin (TC 1.A.8) family.

Its subcellular location is the cell membrane. The catalysed reaction is glycerol(in) = glycerol(out). Its function is as follows. Mediates glycerol diffusion across the cytoplasmic membrane via a pore-type mechanism. This Streptococcus pneumoniae (strain ATCC BAA-255 / R6) protein is Glycerol uptake facilitator protein (glpF).